The chain runs to 20 residues: Succinate--CoA ligase [ADP-forming] subunit beta, mitochondrial (20 aa).

An ATP-grasp domain is found at Ser-8–Pro-20.

The protein belongs to the succinate/malate CoA ligase beta subunit family. ATP-specific subunit beta subfamily. As to quaternary structure, heterodimer of an alpha and a beta subunit. The beta subunit determines specificity for ATP. Interacts with ALAS2.

It localises to the mitochondrion. The catalysed reaction is succinate + ATP + CoA = succinyl-CoA + ADP + phosphate. It functions in the pathway carbohydrate metabolism; tricarboxylic acid cycle; succinate from succinyl-CoA (ligase route): step 1/1. In terms of biological role, ATP-specific succinyl-CoA synthetase functions in the citric acid cycle (TCA), coupling the hydrolysis of succinyl-CoA to the synthesis of ATP and thus represents the only step of substrate-level phosphorylation in the TCA. The beta subunit provides nucleotide specificity of the enzyme and binds the substrate succinate, while the binding sites for coenzyme A and phosphate are found in the alpha subunit. In Canis lupus familiaris (Dog), this protein is Succinate--CoA ligase [ADP-forming] subunit beta, mitochondrial.